The chain runs to 313 residues: Glutathione synthetase (313 aa).

The region spanning 125 to 309 is the ATP-grasp domain; the sequence is KIFVTEFADL…IASLFWDAVE (185 aa). 151 to 207 is an ATP binding site; that stretch reads RKEFGDIIVKPLYGNGGAGIFHLHEADRNLASLLEMFGQLFREPYIVQRYLKDVRKG. Residues Glu280 and Asn282 each contribute to the Mg(2+) site.

It belongs to the prokaryotic GSH synthase family. It depends on Mg(2+) as a cofactor. The cofactor is Mn(2+).

It carries out the reaction gamma-L-glutamyl-L-cysteine + glycine + ATP = glutathione + ADP + phosphate + H(+). The protein operates within sulfur metabolism; glutathione biosynthesis; glutathione from L-cysteine and L-glutamate: step 2/2. This chain is Glutathione synthetase, found in Mesorhizobium japonicum (strain LMG 29417 / CECT 9101 / MAFF 303099) (Mesorhizobium loti (strain MAFF 303099)).